We begin with the raw amino-acid sequence, 631 residues long: Protein FRIABLE 1 (631 aa).

The span at 1–13 (MSVGVPVNPSSSS) shows a compositional bias: low complexity. A disordered region spans residues 1-36 (MSVGVPVNPSSSSQLPAAPTTTTRRRVADSQEDHSH). Over 1-120 (MSVGVPVNPS…NMRSTTNLGR (120 aa)) the chain is Cytoplasmic. Residues 26 to 36 (RVADSQEDHSH) are compositionally biased toward basic and acidic residues. A helical; Signal-anchor for type II membrane protein membrane pass occupies residues 121–141 (FILTLLSILVVTFFLIVALSG). Over 142–631 (GVGRRRKHVE…RPSLRAQSLR (490 aa)) the chain is Lumenal. N-linked (GlcNAc...) asparagine glycans are attached at residues asparagine 246, asparagine 329, and asparagine 364. 384-386 (HLR) lines the substrate pocket. N-linked (GlcNAc...) asparagine glycosylation is found at asparagine 398 and asparagine 425.

The protein belongs to the glycosyltransferase GT106 family. Ubiquitous. Strong expression in young seedlings, particularly at the junction between hypocotyl and root, in emerging cotyledons, and in parts of the roots. Also detected in the inflorescence (sepals, petals, mature pollen and siliques) and rosette leaves.

It is found in the golgi apparatus membrane. It participates in glycan metabolism. Glycosyltransferase required for normal cell adhesion and cell wall integrity. This chain is Protein FRIABLE 1, found in Arabidopsis thaliana (Mouse-ear cress).